The chain runs to 693 residues: Elongation factor G 1 (693 aa).

Positions 4-281 constitute a tr-type G domain; sequence NKLRNIGISA…AVTRFLPSPH (278 aa). Residues 13 to 20, 80 to 84, and 134 to 137 each bind GTP; these read AHIDSGKT, DTPGH, and NKCD.

It belongs to the TRAFAC class translation factor GTPase superfamily. Classic translation factor GTPase family. EF-G/EF-2 subfamily.

It localises to the cytoplasm. Catalyzes the GTP-dependent ribosomal translocation step during translation elongation. During this step, the ribosome changes from the pre-translocational (PRE) to the post-translocational (POST) state as the newly formed A-site-bound peptidyl-tRNA and P-site-bound deacylated tRNA move to the P and E sites, respectively. Catalyzes the coordinated movement of the two tRNA molecules, the mRNA and conformational changes in the ribosome. In Borreliella burgdorferi (strain ATCC 35210 / DSM 4680 / CIP 102532 / B31) (Borrelia burgdorferi), this protein is Elongation factor G 1 (fusA).